Consider the following 455-residue polypeptide: Yop proteins translocation protein P (455 aa).

Disordered regions lie at residues 38–82 (NKGN…QPGR) and 430–455 (DFQA…EAEE). Composition is skewed to basic and acidic residues over residues 43–69 (HPKE…DGLR) and 439–449 (QESRQKRHVYE).

Belongs to the SpaN family.

Its subcellular location is the cytoplasm. In terms of biological role, component of the yop secretion machinery. This chain is Yop proteins translocation protein P (yscP), found in Yersinia pseudotuberculosis serotype I (strain IP32953).